Here is a 292-residue protein sequence, read N- to C-terminus: Glycine--tRNA ligase alpha subunit (292 aa).

Belongs to the class-II aminoacyl-tRNA synthetase family. Tetramer of two alpha and two beta subunits.

The protein localises to the cytoplasm. The catalysed reaction is tRNA(Gly) + glycine + ATP = glycyl-tRNA(Gly) + AMP + diphosphate. In Clostridioides difficile (strain 630) (Peptoclostridium difficile), this protein is Glycine--tRNA ligase alpha subunit.